Consider the following 574-residue polypeptide: K(+)/H(+) antiporter NhaP2 (574 aa).

The next 13 membrane-spanning stretches (helical) occupy residues 6 to 26 (INSFFLIGALLAAVSVLLSPV), 34 to 54 (ILLIFLAVGILAGEDGPGGIL), 58 to 78 (YSTAYLVSNLALAIILLDGGM), 87 to 107 (VALWPALSLATFGVAITTSIT), 109 to 129 (VMAAWLFDLHWLQGLLVGAIV), 173 to 193 (IAILANVDAELSVSFMLISFI), 196 to 216 (FGLGIFLGLGGGWLLWKLVNL), 219 to 239 (LAEGLYSILVLSGGLMIYAAS), 242 to 262 (LGGSGILSIYLVGLFLGNKPT), 271 to 291 (VLDGMTWVSQIGMFLVLGLLL), 299 to 319 (IWLPGLALAFGMILFARPLAV), 335 to 355 (WFISWVGLRGAVPIILAVFPM), and 359 to 379 (LPGAQLYFNLAFFVVLVSLLV). The RCK C-terminal domain maps to 405 to 486 (SGVEIYPSSE…LEALSNLFSQ (82 aa)).

The protein belongs to the monovalent cation:proton antiporter 1 (CPA1) transporter (TC 2.A.36) family. NhaP2 subfamily.

Its subcellular location is the cell inner membrane. It catalyses the reaction K(+)(in) + H(+)(out) = K(+)(out) + H(+)(in). In terms of biological role, k(+)/H(+) antiporter that extrudes potassium in exchange for external protons and maintains the internal concentration of potassium under toxic levels. This is K(+)/H(+) antiporter NhaP2 from Shewanella sp. (strain ANA-3).